The sequence spans 576 residues: K(+)/H(+) antiporter NhaP2 (576 aa).

The next 13 membrane-spanning stretches (helical) occupy residues 6 to 26 (INSF…LSPM), 34 to 54 (ILLI…GGIL), 58 to 78 (YSTA…DGGM), 87 to 107 (VALW…TSIT), 109 to 129 (MMAA…GAIV), 163 to 183 (PMAV…DTEM), 185 to 205 (FSFM…LGLG), 219 to 239 (LADG…YAAS), 242 to 262 (LGGS…NKPT), 271 to 291 (VLDG…GLLL), 299 to 319 (ILIP…PVAV), 335 to 355 (WFIS…VFPM), and 359 to 379 (LPGA…SLLV). In terms of domain architecture, RCK C-terminal spans 405 to 486 (SGVEIYPSSE…LEALSNLFSQ (82 aa)).

This sequence belongs to the monovalent cation:proton antiporter 1 (CPA1) transporter (TC 2.A.36) family. NhaP2 subfamily.

It is found in the cell inner membrane. It carries out the reaction K(+)(in) + H(+)(out) = K(+)(out) + H(+)(in). Its function is as follows. K(+)/H(+) antiporter that extrudes potassium in exchange for external protons and maintains the internal concentration of potassium under toxic levels. This chain is K(+)/H(+) antiporter NhaP2, found in Shewanella baltica (strain OS195).